Here is a 946-residue protein sequence, read N- to C-terminus: MLKLLLGDPNARKLKRYQPILTDINLFEDEIASLNDDELRGKTSDFRTRLDKSSDSSIQECLDDLLPEAFAVVREASKRVLGMRHFDVQLIGGMVLHEGQIAEMKTGEGKTLVATLPSFLNALTGRGVHIVTVNDYLARRDAEWMGQVHRFLGLSVGLIQQDMTPIERRKNYECDITYATNSELGFDYLRDNMANDINEIVQRDFQFCIIDEVDSILIDEARTPLIISGQIERPQEKYQKAAEVVSTLQRAAEMGKDGIDPEGDYEVDEKQRTCTLTDEGFAKSEELLKVKDLFDPKDPWAHYITNALKAKELFVKDVNYIVRNEDAVIVDEFTGRVMPGRRWSDGQHQAIEAKEELPIQPETQTLASITYQNFFLLYPRLAGMTGTAKTEEVEFEKTYKLETTVIPTNRPRSRADWVDQVFKTESAKWRAVANETVEIHKKGRPVLVGTTSVEKSEVLSALLGEQDVPHNLLNAKPENVEREAEIIAQAGRAGAVTIATNMAGRGTDIILGGNSDYMARLKVREVLFPKLVKPEDSHKPPVPLQRRKDSSVGFGKEENNSKDKKVNHSNDVRAQENLYPCVLTDSTEQVLLDLEHQLIKEWGDRVLSPIELEDRISTAAEKAPTQDPLVQSLREAISLVKSEYDVVVKQEEVHVREAGGLHVIGTERHESRRVDNQLRGRAGRQGDLGSTRFFLSLGDNLLRIFGGDRVAALMNAFRVDEDMPIESGMLTRSLESAQKKVETYYFDIRKQVFEYDEVMNNQRRAVYSERHRVLEGDELKKQVIGYGERTMQEIVYAYVNPELPSEEWDLKQLVGKVKEFVYLLDDLKPKDIEALNIDELQAFLQEQLRNAYDLKESQIEESRPGLMREAERFFILQQIDTLWREHLQSMDALRESVGLRGYGQKDPLIEYKNEGYDMFLEMMTNMRRNVIYSMFMFQPAPPSDKE.

ATP contacts are provided by residues Gln89, 107–111 (GEGKT), and Asp508. The disordered stretch occupies residues 534–569 (PEDSHKPPVPLQRRKDSSVGFGKEENNSKDKKVNHS). The span at 546-569 (RRKDSSVGFGKEENNSKDKKVNHS) shows a compositional bias: basic and acidic residues.

This sequence belongs to the SecA family. Monomer and homodimer. Part of the essential Sec protein translocation apparatus which comprises SecA, SecYEG and auxiliary proteins SecDF. Other proteins may also be involved.

The protein localises to the cell inner membrane. It localises to the cellular thylakoid membrane. It is found in the cytoplasm. It catalyses the reaction ATP + H2O + cellular proteinSide 1 = ADP + phosphate + cellular proteinSide 2.. In terms of biological role, part of the Sec protein translocase complex. Interacts with the SecYEG preprotein conducting channel. Has a central role in coupling the hydrolysis of ATP to the transfer of proteins into and across the cell membrane, serving as an ATP-driven molecular motor driving the stepwise translocation of polypeptide chains across the membrane. Its function is as follows. Probably participates in protein translocation into and across both the cytoplasmic and thylakoid membranes in cyanobacterial cells. In Prochlorococcus marinus (strain SARG / CCMP1375 / SS120), this protein is Protein translocase subunit SecA.